Reading from the N-terminus, the 123-residue chain is Modulator protein MzrA (123 aa).

At 1–8 (MIKRPRWQ) the chain is on the cytoplasmic side. A helical membrane pass occupies residues 9 to 29 (YVLLIALALLALATLLVPCMV). At 30 to 123 (RTESELRIRA…EFARAPLNLG (94 aa)) the chain is on the periplasmic side.

Belongs to the MzrA family. Interacts with EnvZ.

The protein resides in the cell inner membrane. Its function is as follows. Modulates the activity of the EnvZ/OmpR two-component regulatory system, probably by directly modulating EnvZ enzymatic activity and increasing stability of phosphorylated OmpR. The protein is Modulator protein MzrA of Serratia proteamaculans (strain 568).